A 696-amino-acid polypeptide reads, in one-letter code: uncharacterized protein (696 aa).

10 consecutive transmembrane segments (helical) span residues 38 to 58, 107 to 127, 215 to 235, 245 to 265, 292 to 312, 329 to 349, 380 to 400, 402 to 422, 433 to 453, and 457 to 477; these read IISI…NALA, LIYV…GYVV, AMAS…IFAL, SLFT…VVAL, TLPF…LIYL, VFFV…ILGE, FWVT…LTSA, FGAA…ACIG, FPSL…FLSS, and LVVA…IALP. CBS domains follow at residues 527 to 587 and 617 to 674; these read RSPE…PMSS and IHPT…THTG.

This sequence belongs to the chloride channel (TC 2.A.49) family.

The protein localises to the membrane. Functionally, voltage-gated chloride channel. This is an uncharacterized protein from Schizosaccharomyces pombe (strain 972 / ATCC 24843) (Fission yeast).